The following is a 201-amino-acid chain: MFDGNPGRRRLVLASGSPRRREMIAGLGCEFSIASADIDESVRPSEAAADYVERLAKEKATAVFEARGDQQDIVVLGADTTVVAGGDILGKPVDFDDAKAMLRRLSGTWHEVLTSVALVAAEGCKVTTTLSRVRFRELSEQEIQRYWDSGEPADKAGAYGIQGLAGSFVERVEGSYSSIVGLPLCETVVLLKEFGIKIWSD.

Residue D79 is the Proton acceptor of the active site.

This sequence belongs to the Maf family. YhdE subfamily. A divalent metal cation is required as a cofactor.

The protein resides in the cytoplasm. The enzyme catalyses dTTP + H2O = dTMP + diphosphate + H(+). It catalyses the reaction UTP + H2O = UMP + diphosphate + H(+). Nucleoside triphosphate pyrophosphatase that hydrolyzes dTTP and UTP. May have a dual role in cell division arrest and in preventing the incorporation of modified nucleotides into cellular nucleic acids. This Hahella chejuensis (strain KCTC 2396) protein is dTTP/UTP pyrophosphatase.